Reading from the N-terminus, the 418-residue chain is Tyrosine--tRNA ligase (418 aa).

Residue Tyr34 participates in L-tyrosine binding. The 'HIGH' region motif lies at 39–48 (PTADSLHLGH). 2 residues coordinate L-tyrosine: Tyr169 and Gln173. Residues 229–233 (KFGKS) carry the 'KMSKS' region motif. Residue Lys232 coordinates ATP. In terms of domain architecture, S4 RNA-binding spans 352–418 (HNIVEILVAA…GKKKYAVLTY (67 aa)).

Belongs to the class-I aminoacyl-tRNA synthetase family. TyrS type 1 subfamily. As to quaternary structure, homodimer.

Its subcellular location is the cytoplasm. The catalysed reaction is tRNA(Tyr) + L-tyrosine + ATP = L-tyrosyl-tRNA(Tyr) + AMP + diphosphate + H(+). Functionally, catalyzes the attachment of tyrosine to tRNA(Tyr) in a two-step reaction: tyrosine is first activated by ATP to form Tyr-AMP and then transferred to the acceptor end of tRNA(Tyr). The sequence is that of Tyrosine--tRNA ligase from Streptococcus pyogenes serotype M49 (strain NZ131).